The primary structure comprises 160 residues: Ribosomal RNA large subunit methyltransferase H (160 aa).

Residues Leu76, Gly108, and 127-132 each bind S-adenosyl-L-methionine; that span reads LGKMTW.

The protein belongs to the RNA methyltransferase RlmH family. In terms of assembly, homodimer.

The protein resides in the cytoplasm. The catalysed reaction is pseudouridine(1915) in 23S rRNA + S-adenosyl-L-methionine = N(3)-methylpseudouridine(1915) in 23S rRNA + S-adenosyl-L-homocysteine + H(+). Functionally, specifically methylates the pseudouridine at position 1915 (m3Psi1915) in 23S rRNA. The polypeptide is Ribosomal RNA large subunit methyltransferase H (Rhizobium meliloti (strain 1021) (Ensifer meliloti)).